A 179-amino-acid polypeptide reads, in one-letter code: MAGSGRDRDPLVVGRVVGDVLDAFVRSTNLKVTYGSKTVSNGCELKPSMVTHQPRVEVGGNDMRTFYTLVMVDPDAPSPSDPNLREYLHWLVTDIPGTTAASFGQEVMCYESPRPTMGIHRLVFVLFQQLGRQTVYAPGWRQNFNTKDFAELYNLGSPVAAVYFNCQREAGSGGRRVYP.

Belongs to the phosphatidylethanolamine-binding protein family. As to expression, expressed in the inner region of the SAM, stem and leaf blade vascular tissues (at protein level).

The protein resides in the cytoplasm. Its subcellular location is the nucleus. Its function is as follows. Probable mobile flower-promoting signal (florigen) that moves from the leaf to the shoot apical meristem (SAM) and induces flowering. Promotes the transition from vegetative growth to flowering downstream of HD1 and EHD1 under short day (SD) conditions. Acts upstream of MADS14 and MADS15. This is Protein HEADING DATE 3A (HD3A) from Oryza sativa subsp. japonica (Rice).